Here is a 429-residue protein sequence, read N- to C-terminus: Transcriptional coactivator AacuS (429 aa).

The HTH iclR-type domain maps to 80-144 (MASQTQLLAC…GFLQEPELGH (65 aa)). Residues 110–129 (IKDVAELIGVPENHICRIVR) constitute a DNA-binding region (H-T-H motif).

The protein localises to the nucleus. In terms of biological role, transcriptional coactivator; part of the gene cluster that mediates the biosynthesis of the tetrahydroxanthone dimer secalonic acid D. The polypeptide is Transcriptional coactivator AacuS (Aspergillus aculeatus (strain ATCC 16872 / CBS 172.66 / WB 5094)).